The following is a 959-amino-acid chain: MGPSQPASTCVHLAPSLQLDAMSDPRNLQPQNQLQFNRNVPTNPRNLAVRYSCPHGIKIEKLKHSYNELNHGKDLDFKAGNELSSSVSFSVISEERLSYAVHLAKRDVKRRQFEEHVKDHLRSLPHSSHKGMHTKVERKDSKSQDVCHCSHQPSRVSLSSSGAKVYVYTSQPGRSDLTVPNSPPTHDPGLQLQPRIEENKNLWEQKGLLEVQRLQKELSGCIRKIEALTKKDRLEEALDPDEEHRIRVRRQEQAVRCARMLYVLQQQVKEIQEELDKLSPQKIKHTKKSWAVSRLAAAHRAAIRALQVFVTQFTDRGEHPVPARCRELGSLIRQLSLCSAKLDADPSVPDVVIDILQQIEALESLLEKKLSPKKAKKCFTEIRSRFPVGSQKILERWPTVLPKSERRHLVTKETFPQETSRPPVAKRLLAAMCQPDGELQRLESEPDVLDAHLLPEEAPRIEDNGTDFKDGTLTPAKPQAVRRKALTGSMPIRKKDTVESARPQQGLHIAERNRPNQPYSKSRLQQTTVSSRLKMNRQPMKDHRAPWIPPNPTSPPASPKCAAWMKVKYSPRDAAKEQSLQQEDIHKESQLRGDAEQEAARLSWPDAESSKRLKELEELEAKEMERKQKQRLNWLEAETSRRTKELDELKAEEMDRLQKLSVSATQLADKVEEAVLERLKPLLIKAQRVNSSVEANSHLKDRPSRHAAAAAQPAEQASDVPFESRNIPQLRDCLEDTAHELWARTQDKILGSETSARLGDSKDSPDLETMMLRMEEMEKYQETVRQRYNKIVYADPHLWMHEERNDQNTPAVSEGPLASHPIKITKTATQKCPAVNILLERPCNANSLDESVTTEEGSEKREAPLPLSREDLHQRKGQTPLSVPPRMRHSIGAYCSRFEQFLRIIAHEAIGSFNPWLIAESFSDELVDEALGAVAAELQDVCEDYAEAVFTSEFLEAAA.

The disordered stretch occupies residues 124–156 (LPHSSHKGMHTKVERKDSKSQDVCHCSHQPSRV). The span at 134 to 145 (TKVERKDSKSQD) shows a compositional bias: basic and acidic residues. Position 279 is a phosphoserine (serine 279). The segment covering 456–470 (EEAPRIEDNGTDFKD) has biased composition (basic and acidic residues). 2 disordered regions span residues 456-560 (EEAP…ASPK) and 572-610 (RDAAKEQSLQQEDIHKESQLRGDAEQEAARLSWPDAESS). The segment covering 515–533 (PNQPYSKSRLQQTTVSSRL) has biased composition (polar residues). Over residues 547-558 (WIPPNPTSPPAS) the composition is skewed to pro residues. Positions 582-674 (QEDIHKESQL…TQLADKVEEA (93 aa)) form a coiled coil. A compositionally biased stretch (basic and acidic residues) spans 583 to 599 (EDIHKESQLRGDAEQEA). Serine 691 bears the Phosphoserine mark. Disordered stretches follow at residues 692–721 (SVEANSHLKDRPSRHAAAAAQPAEQASDVP) and 848–883 (LDESVTTEEGSEKREAPLPLSREDLHQRKGQTPLSV). Residues 707–717 (AAAAAQPAEQA) show a composition bias toward low complexity. Over residues 857–874 (GSEKREAPLPLSREDLHQ) the composition is skewed to basic and acidic residues. A necessary and sufficient for CEP20-binding region spans residues 877-959 (GQTPLSVPPR…FTSEFLEAAA (83 aa)).

As to quaternary structure, interacts with CEP63 and WDR62. Forms a complex with OFD1 and CEP20/FOR20. Interacts with PCM1.

The protein localises to the cytoplasm. It localises to the cytoskeleton. The protein resides in the microtubule organizing center. It is found in the centrosome. Its subcellular location is the centriolar satellite. In terms of biological role, involved in centriole duplication. Positively regulates CEP63 centrosomal localization. Required for WDR62 centrosomal localization and promotes the centrosomal localization of CDK2. May play a role in cilium assembly. The sequence is that of Protein moonraker (Kiaa0753) from Mus musculus (Mouse).